A 912-amino-acid polypeptide reads, in one-letter code: Tiger protein E1 (912 aa).

Positions Met-1–Ser-22 are cleaved as a signal peptide. Over Asp-23 to Pro-815 the chain is Extracellular. Asn-54, Asn-108, Asn-164, Asn-183, Asn-232, Asn-268, Asn-323, Asn-356, Asn-398, Asn-407, Asn-568, Asn-637, Asn-653, Asn-658, Asn-706, Asn-716, Asn-763, Asn-774, Asn-781, and Asn-809 each carry an N-linked (GlcNAc...) asparagine glycan. 2 consecutive IPT/TIG domains span residues Ser-532 to Thr-609 and Pro-612 to Ile-686. Residues Thr-715–Phe-796 enclose the IPT/TIG 3 domain. The helical transmembrane segment at Asn-816 to Ile-836 threads the bilayer. Residues Lys-837–Asp-912 lie on the Cytoplasmic side of the membrane.

It localises to the cell membrane. The sequence is that of Tiger protein E1 (tgrE1) from Dictyostelium discoideum (Social amoeba).